The following is a 307-amino-acid chain: tRNA dimethylallyltransferase 1 (307 aa).

10 to 17 (GPTASGKT) provides a ligand contact to ATP. Substrate is bound at residue 12 to 17 (TASGKT). The interval 35–38 (DSRQ) is interaction with substrate tRNA.

Belongs to the IPP transferase family. In terms of assembly, monomer. The cofactor is Mg(2+).

It carries out the reaction adenosine(37) in tRNA + dimethylallyl diphosphate = N(6)-dimethylallyladenosine(37) in tRNA + diphosphate. In terms of biological role, catalyzes the transfer of a dimethylallyl group onto the adenine at position 37 in tRNAs that read codons beginning with uridine, leading to the formation of N6-(dimethylallyl)adenosine (i(6)A). This chain is tRNA dimethylallyltransferase 1, found in Geotalea daltonii (strain DSM 22248 / JCM 15807 / FRC-32) (Geobacter daltonii).